The primary structure comprises 152 residues: Deoxyuridine 5'-triphosphate nucleotidohydrolase (152 aa).

Substrate contacts are provided by residues Arg-71–Gly-73, Asn-84, Leu-88–Asp-90, and Met-98.

It belongs to the dUTPase family. As to quaternary structure, homotrimer. The cofactor is Mg(2+).

The enzyme catalyses dUTP + H2O = dUMP + diphosphate + H(+). It functions in the pathway pyrimidine metabolism; dUMP biosynthesis; dUMP from dCTP (dUTP route): step 2/2. This enzyme is involved in nucleotide metabolism: it produces dUMP, the immediate precursor of thymidine nucleotides and it decreases the intracellular concentration of dUTP so that uracil cannot be incorporated into DNA. The protein is Deoxyuridine 5'-triphosphate nucleotidohydrolase of Escherichia coli O1:K1 / APEC.